Reading from the N-terminus, the 597-residue chain is MDKSKIRNFSIIAHIDHGKSTLADRILELTNTVAARDLEEQFLDQMDLERERGITIKLNAVQIKYKDYTFHLIDTPGHVDFTYEVSRSLAASEGALLLVDATQGIEAQTLANVYLALENNLEIIPIINKIDLPSANVEKTKEEIENVIGIPADNAVCVSAKTGLNCEKVLDAIVDYVPAPKDADDNKPLKALIFDSYFDEYRGVIMLIRVFQGKLKVGDDFKFMSNNANYHVIELGVRNPKETKKEYLEAGEVGYVAATIRDAKEVHVGDTITLVENPALEPLPGYKRKKPVLFTGFYPIDTRDYAELKKSLDKISLSDSSLTWEQETSKALGFGFRVGFLGMLHMDVIQERLSREYKVGIIATSPSVEYKVVKTNGTFEMISNPSLMPDRTYIDHIEEPYIEATIILPNEYIGNIMDLCQNKRGIYKSLDYIDDSRSRLIYEMPLGEIVFDFFDKMKSLSKGYASFEYDLIGYKTSDLVKVDILLNGDKIDAFSIITHKDSAYEKSRDLTKRLKDAIPRQNFEVPVQATIGGKIIARETIKAFRKDVTHKLHASDISRYKKLLEKQKAGKKKMKMLGSVEVPQEAFLDILKTNVDK.

The tr-type G domain maps to 4–181 (SKIRNFSIIA…AIVDYVPAPK (178 aa)). GTP-binding positions include 16-21 (DHGKST) and 128-131 (NKID).

The protein belongs to the TRAFAC class translation factor GTPase superfamily. Classic translation factor GTPase family. LepA subfamily.

The protein resides in the cell membrane. It carries out the reaction GTP + H2O = GDP + phosphate + H(+). In terms of biological role, required for accurate and efficient protein synthesis under certain stress conditions. May act as a fidelity factor of the translation reaction, by catalyzing a one-codon backward translocation of tRNAs on improperly translocated ribosomes. Back-translocation proceeds from a post-translocation (POST) complex to a pre-translocation (PRE) complex, thus giving elongation factor G a second chance to translocate the tRNAs correctly. Binds to ribosomes in a GTP-dependent manner. In Mycoplasmopsis agalactiae (strain NCTC 10123 / CIP 59.7 / PG2) (Mycoplasma agalactiae), this protein is Elongation factor 4.